The primary structure comprises 158 residues: NAD(P)H-quinone oxidoreductase subunit J, chloroplastic (158 aa).

This sequence belongs to the complex I 30 kDa subunit family. As to quaternary structure, NDH is composed of at least 16 different subunits, 5 of which are encoded in the nucleus.

The protein localises to the plastid. It localises to the chloroplast thylakoid membrane. It catalyses the reaction a plastoquinone + NADH + (n+1) H(+)(in) = a plastoquinol + NAD(+) + n H(+)(out). The catalysed reaction is a plastoquinone + NADPH + (n+1) H(+)(in) = a plastoquinol + NADP(+) + n H(+)(out). Its function is as follows. NDH shuttles electrons from NAD(P)H:plastoquinone, via FMN and iron-sulfur (Fe-S) centers, to quinones in the photosynthetic chain and possibly in a chloroplast respiratory chain. The immediate electron acceptor for the enzyme in this species is believed to be plastoquinone. Couples the redox reaction to proton translocation, and thus conserves the redox energy in a proton gradient. This Vitis vinifera (Grape) protein is NAD(P)H-quinone oxidoreductase subunit J, chloroplastic.